The following is a 102-amino-acid chain: Large ribosomal subunit protein uL24 (102 aa).

The tract at residues 44–65 is disordered; the sequence is HAKPSQDNPQGGILNQEAPIHS.

It belongs to the universal ribosomal protein uL24 family. As to quaternary structure, part of the 50S ribosomal subunit.

In terms of biological role, one of two assembly initiator proteins, it binds directly to the 5'-end of the 23S rRNA, where it nucleates assembly of the 50S subunit. Functionally, one of the proteins that surrounds the polypeptide exit tunnel on the outside of the subunit. The sequence is that of Large ribosomal subunit protein uL24 from Shouchella clausii (strain KSM-K16) (Alkalihalobacillus clausii).